The sequence spans 444 residues: NAD(+)--protein-arginine ADP-ribosyltransferase Tre1 (444 aa).

Residues 72–140 (PRHVTGVLAD…NDLLACSAEI (69 aa)) form a PAAR domain region. Residues 266 to 444 (MTLAEAVGQE…TTHLLYREIP (179 aa)) enclose the TR mART core domain. The ART domain stretch occupies residues 274 to 444 (QEQAKVWTQT…TTHLLYREIP (171 aa)). Residues Arg-356, Ser-381, and Glu-415 contribute to the active site.

Belongs to the Arg-specific ADP-ribosyltransferase family. In terms of assembly, forms a stable complex with cognate immunity protein Tri1-Sp.

It localises to the secreted. Its subcellular location is the host cytoplasm. It catalyses the reaction L-arginyl-[protein] + NAD(+) = N(omega)-(ADP-D-ribosyl)-L-arginyl-[protein] + nicotinamide + H(+). Its function is as follows. Toxic component of a contact-dependent interbacterial competition system (also called effector-immunity systems). Acts by ADP-ribosylating a number of target proteins in target cells; E.coli target proteins include FtsZ, EFTu, RNase E, Fis, RL9, SucB, and LolD. FtsZ is thought to be the physiologically relevant target as it is ADP-ribosylated on a critical residue. ADP-ribosylation of FtsZ prevents formation of the FtsZ mid-cell ring and inhibits cell division. Overexpression of the whole Tre1 protein or the ART domain in E.coli is toxic; cells elongate dramatically and some undergo lysis. Toxic activity is neutralized by coexpression of the cognate immunity protein Tri1-Sp; Tri1-Sp neutralizes this protein both by binding to and occluding the active site (via Tri1's N-terminal extension) and by hydrolysis of the ADP-ribosyl moiety from the target protein. Tre1 can also be neutralized by non-cognate immunity protein Tri1-Pp from P.putida strain GB-1, with which it does not form a stable complex; DraG of R.palustris does not neutralize the toxic effects of this protein. In interbacterial competition studies Tri1 from P.putida strain B6-2 also neutralizes this protein. The sequence is that of NAD(+)--protein-arginine ADP-ribosyltransferase Tre1 from Serratia proteamaculans (strain 568).